The primary structure comprises 248 residues: Deoxyribose-phosphate aldolase (248 aa).

Catalysis depends on Asp-117, which acts as the Proton donor/acceptor. Lys-179 acts as the Schiff-base intermediate with acetaldehyde in catalysis. Catalysis depends on Lys-208, which acts as the Proton donor/acceptor.

The protein belongs to the DeoC/FbaB aldolase family. DeoC type 1 subfamily.

It is found in the cytoplasm. It catalyses the reaction 2-deoxy-D-ribose 5-phosphate = D-glyceraldehyde 3-phosphate + acetaldehyde. It participates in carbohydrate degradation; 2-deoxy-D-ribose 1-phosphate degradation; D-glyceraldehyde 3-phosphate and acetaldehyde from 2-deoxy-alpha-D-ribose 1-phosphate: step 2/2. In terms of biological role, catalyzes a reversible aldol reaction between acetaldehyde and D-glyceraldehyde 3-phosphate to generate 2-deoxy-D-ribose 5-phosphate. The chain is Deoxyribose-phosphate aldolase from Thermotoga sp. (strain RQ2).